We begin with the raw amino-acid sequence, 245 residues long: Tetraspanin-6 (245 aa).

The Cytoplasmic portion of the chain corresponds to 1-19 (MASPSRRLQTKPVITCFKS). A helical transmembrane segment spans residues 20-40 (VLLIYTFIFWITGVILLAVGI). Over 41-59 (WGKVSLENYFSLLNEKATN) the chain is Extracellular. A helical transmembrane segment spans residues 60–80 (VPFVLIGTGTVIILLGTFGCF). The Cytoplasmic segment spans residues 81-93 (ATCRASAWMLKLY). Residues 94 to 114 (AMFLTLIFLVELVAAIIGFVF) traverse the membrane as a helical segment. Topologically, residues 115–208 (RHEIKNSLKN…IMVMTIIESE (94 aa)) are extracellular. Asn-134 is a glycosylation site (N-linked (GlcNAc...) asparagine). Residues 209–229 (MGVVAGISFGVACFQLIGIFL) form a helical membrane-spanning segment. At 230–245 (AYCLSRAITNNQYEIV) the chain is on the cytoplasmic side.

It belongs to the tetraspanin (TM4SF) family.

It localises to the membrane. The chain is Tetraspanin-6 (TSPAN6) from Bos taurus (Bovine).